We begin with the raw amino-acid sequence, 325 residues long: Probable isoaspartyl peptidase/L-asparaginase 2 (325 aa).

The Nucleophile role is filled by Thr-195. Residues 223–226 (RIGD) and 245–248 (TGEG) contribute to the substrate site.

The protein belongs to the Ntn-hydrolase family. As to quaternary structure, heterotetramer of two alpha and two beta chains arranged as a dimer of alpha/beta heterodimers. Cleaved into an alpha and beta chain by autocatalysis; this activates the enzyme. The N-terminal residue of the beta subunit is responsible for the nucleophile hydrolase activity.

The catalysed reaction is Cleavage of a beta-linked Asp residue from the N-terminus of a polypeptide.. In terms of biological role, acts in asparagine catabolism and also in the final steps of protein degradation via hydrolysis of a range of isoaspartyl dipeptides. The polypeptide is Probable isoaspartyl peptidase/L-asparaginase 2 (Arabidopsis thaliana (Mouse-ear cress)).